The chain runs to 643 residues: Extracellular metalloproteinase 4 (643 aa).

A signal peptide spans 1-18 (MHGLMLAGLLALPLSVLG). The propeptide occupies 19-254 (HPTESHSSGI…VHSVVDYVSA (236 aa)). Residues 47-57 (TKSDAVPKQDG) show a composition bias toward basic and acidic residues. Residues 47-73 (TKSDAVPKQDGESFTTSSTGNDNSSSG) form a disordered region. Positions 61 to 73 (TTSSTGNDNSSSG) are enriched in low complexity. 2 N-linked (GlcNAc...) asparagine glycosylation sites follow: N271 and N420. Position 437 (H437) interacts with Zn(2+). The active site involves E438. H441 lines the Zn(2+) pocket. N-linked (GlcNAc...) asparagine glycosylation is found at N603 and N629.

Belongs to the peptidase M36 family. It depends on Zn(2+) as a cofactor.

Its subcellular location is the secreted. Functionally, secreted metalloproteinase probably acting as a virulence factor. The protein is Extracellular metalloproteinase 4 (MEP4) of Trichophyton rubrum (Athlete's foot fungus).